A 241-amino-acid polypeptide reads, in one-letter code: ATP synthase subunit a (241 aa).

5 helical membrane-spanning segments follow: residues 30–50, 91–111, 128–148, 193–213, and 214–234; these read GQVF…ISLG, FIGT…LIPW, INTT…AGLS, LVVG…VMFL, and GLFT…YYIG.

The protein belongs to the ATPase A chain family. F-type ATPases have 2 components, CF(1) - the catalytic core - and CF(0) - the membrane proton channel. CF(1) has five subunits: alpha(3), beta(3), gamma(1), delta(1), epsilon(1). CF(0) has four main subunits: a, b, b' and c.

It is found in the cellular thylakoid membrane. In terms of biological role, key component of the proton channel; it plays a direct role in the translocation of protons across the membrane. In Prochlorococcus marinus (strain MIT 9301), this protein is ATP synthase subunit a.